Consider the following 443-residue polypeptide: Sensor histidine protein kinase HK06 (443 aa).

2 helical membrane passes run 16–36 (FAIL…TFPF) and 140–160 (ILLL…FVFS). The region spanning 165-217 (KRLLNPLFYISEVTSKMQDLDDNIRFDESRKDEVGEVGKQINGMYEHLLKVIH) is the HAMP domain. One can recognise a Histidine kinase domain in the interval 239–443 (GASHELKTPL…EHGMEFKISL (205 aa)). Phosphohistidine; by autocatalysis is present on H242.

It is found in the cell membrane. The catalysed reaction is ATP + protein L-histidine = ADP + protein N-phospho-L-histidine.. Member of the two-component regulatory system HK06/RR06 involved in regulation of target genes, including choline-binding protein CbpA. Has been shown in one study to not be required for regulation of expression of choline-binding protein CbpA. This Streptococcus pneumoniae serotype 2 (strain D39 / NCTC 7466) protein is Sensor histidine protein kinase HK06.